The sequence spans 125 residues: DNA-directed RNA polymerase subunit omega (125 aa).

This sequence belongs to the RNA polymerase subunit omega family. As to quaternary structure, the RNAP catalytic core consists of 2 alpha, 1 beta, 1 beta' and 1 omega subunit. When a sigma factor is associated with the core the holoenzyme is formed, which can initiate transcription.

The enzyme catalyses RNA(n) + a ribonucleoside 5'-triphosphate = RNA(n+1) + diphosphate. Promotes RNA polymerase assembly. Latches the N- and C-terminal regions of the beta' subunit thereby facilitating its interaction with the beta and alpha subunits. In Zymomonas mobilis subsp. mobilis (strain ATCC 31821 / ZM4 / CP4), this protein is DNA-directed RNA polymerase subunit omega.